An 85-amino-acid polypeptide reads, in one-letter code: Hepcidin (85 aa).

An N-terminal signal peptide occupies residues 1 to 24; that stretch reads MKTFSVAVAVAVVLAFICLQESSA. Positions 25–64 are excised as a propeptide; sequence VPVTEVQELEEPMSNEYQEMPVESWKMPYNNRHKRHSSPG. 4 disulfide bridges follow: C66-C83, C69-C72, C70-C79, and C73-C82.

In terms of tissue distribution, predominantly expressed in liver.

The protein localises to the secreted. Functionally, seems to act as a signaling molecule involved in the maintenance of iron homeostasis. Seems to be required in conjunction with HFE to regulate both intestinal iron absorption and iron storage in macrophages. In terms of biological role, antimicrobial activity against Gram-negative bacteria such as E.coli. This Morone chrysops x Morone saxatilis (White bass x Striped bass) protein is Hepcidin (hamp).